Reading from the N-terminus, the 348-residue chain is MTQPMPGKPAEDAENELDIRGLFRTLWAGKLWIIGMGLAFALIALAYTFFARQEWSSTAITDRPTVNMLGGYYSQQQFLRNLDVRSNMASADQPSVMDEAYKEFVMQLASWDTRREFWLQTDYYKQRMVGNSKADAALLDEMINNIQFIPGDFTRAVNDSVKLIAETAPDANNLLRQYVAFASQRAASHLNDELKGAWAARTIQMKAQVKRQEEVAKAIYDRRMNSIEQALKIAEQHNISRSATDVPAEELPDSEMFLLGRPMLQARLENLQAVGPAFDLDYDQNRAMLNTLNVGPTLDPRFQTYRYLRTPEEPVKRDSPRRAFLMIMWGIVGGLIGAGVALTRRCSK.

Topologically, residues 1 to 30 (MTQPMPGKPAEDAENELDIRGLFRTLWAGK) are cytoplasmic. A helical membrane pass occupies residues 31–51 (LWIIGMGLAFALIALAYTFFA). Residues 52–322 (RQEWSSTAIT…EPVKRDSPRR (271 aa)) lie on the Periplasmic side of the membrane. The helical transmembrane segment at 323–343 (AFLMIMWGIVGGLIGAGVALT) threads the bilayer. Residues 344–348 (RRCSK) lie on the Cytoplasmic side of the membrane.

This sequence belongs to the WzzB/Cld/Rol family. Homooctamer. Probably part of a complex composed of WzxE, WzyE and WzzE.

Its subcellular location is the cell inner membrane. Its pathway is bacterial outer membrane biogenesis; enterobacterial common antigen biosynthesis. Its function is as follows. Modulates the polysaccharide chain length of enterobacterial common antigen (ECA). This is ECA polysaccharide chain length modulation protein from Escherichia coli O157:H7.